The sequence spans 508 residues: Photosystem II CP47 reaction center protein (508 aa).

6 helical membrane-spanning segments follow: residues 21-36 (SVHIMHTALVAGWAGS), 101-115 (IVFSGLCFLAAIWHW), 140-156 (GIHLFLSGLACFGFGAF), 203-218 (IAAGTLGILAGLFHLS), 237-252 (VLSSSIAAVFFAAFVV), and 457-472 (SFALLFFFGHIWHGAR).

It belongs to the PsbB/PsbC family. PsbB subfamily. PSII is composed of 1 copy each of membrane proteins PsbA, PsbB, PsbC, PsbD, PsbE, PsbF, PsbH, PsbI, PsbJ, PsbK, PsbL, PsbM, PsbT, PsbX, PsbY, PsbZ, Psb30/Ycf12, at least 3 peripheral proteins of the oxygen-evolving complex and a large number of cofactors. It forms dimeric complexes. Binds multiple chlorophylls. PSII binds additional chlorophylls, carotenoids and specific lipids. serves as cofactor.

The protein localises to the plastid. It localises to the chloroplast thylakoid membrane. Its function is as follows. One of the components of the core complex of photosystem II (PSII). It binds chlorophyll and helps catalyze the primary light-induced photochemical processes of PSII. PSII is a light-driven water:plastoquinone oxidoreductase, using light energy to abstract electrons from H(2)O, generating O(2) and a proton gradient subsequently used for ATP formation. The polypeptide is Photosystem II CP47 reaction center protein (Ipomoea purpurea (Common morning glory)).